The primary structure comprises 201 residues: Glutathione S-transferase GstA (201 aa).

The GST N-terminal domain maps to 1-81 (MKLFYKPGAC…YLADSVPDRQ (81 aa)). Glutathione-binding positions include Cys10, Lys35, Val52, 65-66 (EG), Asn99, and 103-106 (TELH). One can recognise a GST C-terminal domain in the interval 87–201 (NSISRYKTIE…QDALSAEGLK (115 aa)).

This sequence belongs to the GST superfamily. Beta family. In terms of assembly, homodimer.

It localises to the cytoplasm. The enzyme catalyses RX + glutathione = an S-substituted glutathione + a halide anion + H(+). Its function is as follows. Conjugation of reduced glutathione to a wide number of exogenous and endogenous hydrophobic electrophiles. The chain is Glutathione S-transferase GstA (gstA) from Escherichia coli O157:H7.